We begin with the raw amino-acid sequence, 68 residues long: Phycobilisome 7.8 kDa linker polypeptide, allophycocyanin-associated, core (68 aa).

The region spanning 2 to 57 is the CpcD-like domain; it reads SRLFKITALVPSLSRTRTQRELQNTYFTKLVPYENWFREQQRIQKAGGKIIKVELA.

It belongs to the phycobilisome linker protein family.

The protein resides in the cellular thylakoid membrane. Rod linker protein, associated with allophycocyanin. Linker polypeptides determine the state of aggregation and the location of the disk-shaped phycobiliprotein units within the phycobilisome and modulate their spectroscopic properties in order to mediate a directed and optimal energy transfer. This Nostoc sp. (strain PCC 7120 / SAG 25.82 / UTEX 2576) protein is Phycobilisome 7.8 kDa linker polypeptide, allophycocyanin-associated, core (apcC).